The chain runs to 433 residues: MDQRGGTMSRSASLFQQAAGLIPGGVNSPVRAFKSVGGIPPFIREAAGAMMTDEDGKSYIDYVGSWGPMILGHAPKEVVAAIQQAAVRGCSFGAPTSNEILLAQKLIELVPSLEMVRLVNSGTEATMSALRLARAATGRDAILKFDGCYHGHADSLLVAAGSGLATFGVPSSPGVTRGTAKDTLTVPFNDLAAVEACFAQHPEGIAAVIVEPVAGNMGCVLPRPGYLKGLRDICTKYGTILIFDEVMTGFRVDLRCAQGFYDVTPDLTCLGKVIGGGLPVGAYGGKMELMNQVSPAGPVYQAGTLSGNPLATAAGLATLEAISQPGFYETLTSRTQRLTVGIGKALDEAGIPHVSYHIGSMFGLFFTDAREVYNFADAAKNDHNRFKDWFHCMLEEGVYFAPSPYEAGFVSIAHDEAIIDLTIEKARKVAKTL.

K272 carries the post-translational modification N6-(pyridoxal phosphate)lysine.

The protein belongs to the class-III pyridoxal-phosphate-dependent aminotransferase family. HemL subfamily. As to quaternary structure, homodimer. Pyridoxal 5'-phosphate is required as a cofactor.

Its subcellular location is the cytoplasm. The catalysed reaction is (S)-4-amino-5-oxopentanoate = 5-aminolevulinate. The protein operates within porphyrin-containing compound metabolism; protoporphyrin-IX biosynthesis; 5-aminolevulinate from L-glutamyl-tRNA(Glu): step 2/2. This is Glutamate-1-semialdehyde 2,1-aminomutase from Magnetococcus marinus (strain ATCC BAA-1437 / JCM 17883 / MC-1).